Here is a 338-residue protein sequence, read N- to C-terminus: O-methyltransferase 4 (338 aa).

S-adenosyl-L-methionine is bound by residues Gly-184, Asp-207, Asn-230, Phe-231, Lys-244, and Arg-245. The active-site Proton acceptor is the His-248.

It belongs to the class I-like SAM-binding methyltransferase superfamily. Cation-independent O-methyltransferase family. COMT subfamily.

The enzyme catalyses (3,5-dichloro-2,4,6-trihydroxyphenyl)hexan-1-one + S-adenosyl-L-methionine = 1-(3,5-dichloro-2,6-dihydroxy-4-methoxyphenyl)hexan-1-one + S-adenosyl-L-homocysteine + H(+). This Dictyostelium discoideum (Social amoeba) protein is O-methyltransferase 4 (omt4).